Here is a 2531-residue protein sequence, read N- to C-terminus: Highly reducing polyketide synthase gloL (2531 aa).

Residues 15–435 (YEPLAIVGMG…GANAHVILDS (421 aa)) enclose the Ketosynthase family 3 (KS3) domain. Catalysis depends on for beta-ketoacyl synthase activity residues Cys-187, His-322, and His-358. Positions 449-525 (TNGLSVNGHS…GHSVNGHSKP (77 aa)) are disordered. Positions 453-503 (SVNGHSINGNSVNGHSVNGHSTNGHSINGNSVNGHSVNGNSVNGHSTNGHS) are enriched in low complexity. The segment covering 505–521 (NGHSANGNSINGHSVNG) has biased composition (polar residues). Residues 602-909 (MVFTGQGAQW…VTALERGKDC (308 aa)) form a malonyl-CoA:ACP transacylase (MAT) domain region. The N-terminal hotdog fold stretch occupies residues 971–1099 (HEILGSRTVE…GQIRSGTDNP (129 aa)). The dehydratase (DH) domain stretch occupies residues 971-1251 (HEILGSRTVE…GGQFSPIEED (281 aa)). Residues 971–1254 (HEILGSRTVE…FSPIEEDSSD (284 aa)) enclose the PKS/mFAS DH domain. Catalysis depends on His-1003, which acts as the Proton acceptor; for dehydratase activity. Positions 1109-1254 (DHPRSVPSPY…FSPIEEDSSD (146 aa)) are C-terminal hotdog fold. The active-site Proton donor; for dehydratase activity is Asp-1169. Residues 1419-1597 (DFFTAAGHSK…FSGCDATVYD (179 aa)) are methyltransferase (CMet) domain. An enoyl reductase (ER) (ER) domain region spans residues 1806–2114 (GLLQTLRWVP…KGSHIGKIVV (309 aa)). A ketoreductase (KR) domain region spans residues 2139–2312 (GYLLVGGLGG…ASVVDIGVMG (174 aa)). Residues 2413–2505 (MSSVETDSSI…ALGLLTIEGL (93 aa)) enclose the Carrier domain. Ser-2464 is subject to O-(pantetheine 4'-phosphoryl)serine.

Its pathway is mycotoxin biosynthesis. Its function is as follows. Highly reducing polyketide synthase; part of the gene cluster that mediates the biosynthesis of pneumocandins, lipohexapeptides of the echinocandin family that prevent fungal cell wall formation by non-competitive inhibition of beta-1,3-glucan synthase. The 10,12-dimethylmyristoyl side chain is synthesized by the reducing polyketide synthase gloL/GLPKS4. The thioesterase gloN/GLHYD exclusively interacts with gloL/GLPKS4 to maintain turnover of the polyketide side chain. The 10R,12S-dimethylmyristic acid is then transferred to the first thiolation domain of the nonribosomal peptide synthetase gloA/GLNRPS4 by the acyl-AMP ligase gloD/GLligase, followed by its acylation to L-ornithine to trigger elongation of the cyclic hexapeptide. L-ornithine, 4R-hydroxyl-L-proline (generated from L-proline by the dioxygenase gloF/GLOXY2), 3S-hydroxyl-L-homotyrosine (generated by gloG/GLHtyB, gloH/GLHtyA, gloI/GLHtyC, gloJ/GLHtyD and hydroxylated at C-3 by the dioxygenase gloM/GLOXY1), 3R-hydroxyl-L-glutamine (generated from L-glutamine probably by the dioxygenase gloE/GLOXY3) and 3S-hydroxyl-L-proline (generated from L-proline by the dioxygenase gloF/GLOXY2 to yield pneumocandin B0), or 3S-hydroxyl-4S-methyl-L-proline (generated from L-leucine by the dioxygenase gloC/GLOXY4 to yield pneumocandin A0) are sequentially added to the growing chain. The last C domain of gloA/GLNRPS4 is proposed to be responsible for cyclization by condensation to form the peptide bond between L-ornithine and 3S-hydroxyl-4S-methyl-L-proline (for pneumocandin A0) or 3S-hydroxyl-L-proline (for pneumocandin B0). Finally, the subsequent C-4 hydroxylation of 3S-hydroxyl-L-homotyrosine and L-ornithine dihydroxylation at C-4 and C-5 are performed by the cytochrome P450 monooxygenases gloP/GLP450-1 and gloO/GLP450-2, respectively. The chain is Highly reducing polyketide synthase gloL from Glarea lozoyensis (strain ATCC 20868 / MF5171).